We begin with the raw amino-acid sequence, 336 residues long: D-erythrose-4-phosphate dehydrogenase (336 aa).

11–12 (RI) lines the NAD(+) pocket. Substrate contacts are provided by residues 153 to 155 (SCT), R199, 212 to 213 (TR), and R235. Catalysis depends on C154, which acts as the Nucleophile. N317 is an NAD(+) binding site.

It belongs to the glyceraldehyde-3-phosphate dehydrogenase family. Epd subfamily. Homotetramer.

Its subcellular location is the cytoplasm. It carries out the reaction D-erythrose 4-phosphate + NAD(+) + H2O = 4-phospho-D-erythronate + NADH + 2 H(+). It participates in cofactor biosynthesis; pyridoxine 5'-phosphate biosynthesis; pyridoxine 5'-phosphate from D-erythrose 4-phosphate: step 1/5. Catalyzes the NAD-dependent conversion of D-erythrose 4-phosphate to 4-phosphoerythronate. The protein is D-erythrose-4-phosphate dehydrogenase of Alteromonas mediterranea (strain DSM 17117 / CIP 110805 / LMG 28347 / Deep ecotype).